The chain runs to 324 residues: Ferrochelatase (324 aa).

H197 and E278 together coordinate Fe cation.

Belongs to the ferrochelatase family.

The protein resides in the cytoplasm. It catalyses the reaction heme b + 2 H(+) = protoporphyrin IX + Fe(2+). The protein operates within porphyrin-containing compound metabolism; protoheme biosynthesis; protoheme from protoporphyrin-IX: step 1/1. In terms of biological role, catalyzes the ferrous insertion into protoporphyrin IX. The sequence is that of Ferrochelatase from Aeromonas hydrophila subsp. hydrophila (strain ATCC 7966 / DSM 30187 / BCRC 13018 / CCUG 14551 / JCM 1027 / KCTC 2358 / NCIMB 9240 / NCTC 8049).